The following is a 146-amino-acid chain: D-aminoacyl-tRNA deacylase (146 aa).

The short motif at 137 to 138 (GP) is the Gly-cisPro motif, important for rejection of L-amino acids element.

This sequence belongs to the DTD family. In terms of assembly, homodimer.

It is found in the cytoplasm. The enzyme catalyses glycyl-tRNA(Ala) + H2O = tRNA(Ala) + glycine + H(+). It carries out the reaction a D-aminoacyl-tRNA + H2O = a tRNA + a D-alpha-amino acid + H(+). An aminoacyl-tRNA editing enzyme that deacylates mischarged D-aminoacyl-tRNAs. Also deacylates mischarged glycyl-tRNA(Ala), protecting cells against glycine mischarging by AlaRS. Acts via tRNA-based rather than protein-based catalysis; rejects L-amino acids rather than detecting D-amino acids in the active site. By recycling D-aminoacyl-tRNA to D-amino acids and free tRNA molecules, this enzyme counteracts the toxicity associated with the formation of D-aminoacyl-tRNA entities in vivo and helps enforce protein L-homochirality. The chain is D-aminoacyl-tRNA deacylase from Bacillus thuringiensis (strain Al Hakam).